A 256-amino-acid chain; its full sequence is Small ribosomal subunit protein eS1 (256 aa).

Basic residues predominate over residues 1-18 (MAVGKNKRLSKGKKGIKK). The tract at residues 1–20 (MAVGKNKRLSKGKKGIKKRT) is disordered. At alanine 2 the chain carries N-acetylalanine; partial.

It belongs to the eukaryotic ribosomal protein eS1 family. In terms of assembly, component of the small ribosomal subunit. Mature ribosomes consist of a small (40S) and a large (60S) subunit. The 40S subunit contains about 33 different proteins and 1 molecule of RNA (18S). The 60S subunit contains about 49 different proteins and 3 molecules of RNA (25S, 5.8S and 5S).

The protein localises to the cytoplasm. This Emericella nidulans (strain FGSC A4 / ATCC 38163 / CBS 112.46 / NRRL 194 / M139) (Aspergillus nidulans) protein is Small ribosomal subunit protein eS1 (rps1).